Reading from the N-terminus, the 516-residue chain is NADH-quinone oxidoreductase subunit N (516 aa).

A run of 14 helical transmembrane segments spans residues 12 to 32 (LLPA…DLLV), 37 to 57 (VTIS…VLVG), 81 to 101 (LVAV…GPLL), 108 to 128 (VGEY…LGAA), 131 to 151 (LITL…LVGL), 163 to 183 (VTFF…AALL), 213 to 233 (VAVA…PFHA), 246 to 266 (VAAY…LAVV), 274 to 294 (ITGL…NLVA), 303 to 323 (LLAW…GALA), 341 to 361 (VAYT…VVAL), 386 to 406 (VGLA…AGLF), 419 to 439 (GAAG…AYYL), and 491 to 511 (VVLA…QLVL).

It belongs to the complex I subunit 2 family. As to quaternary structure, NDH-1 is composed of 14 different subunits. Subunits NuoA, H, J, K, L, M, N constitute the membrane sector of the complex.

Its subcellular location is the cell membrane. It catalyses the reaction a quinone + NADH + 5 H(+)(in) = a quinol + NAD(+) + 4 H(+)(out). Functionally, NDH-1 shuttles electrons from NADH, via FMN and iron-sulfur (Fe-S) centers, to quinones in the respiratory chain. The immediate electron acceptor for the enzyme in this species is believed to be a menaquinone. Couples the redox reaction to proton translocation (for every two electrons transferred, four hydrogen ions are translocated across the cytoplasmic membrane), and thus conserves the redox energy in a proton gradient. The sequence is that of NADH-quinone oxidoreductase subunit N from Salinispora tropica (strain ATCC BAA-916 / DSM 44818 / JCM 13857 / NBRC 105044 / CNB-440).